Reading from the N-terminus, the 299-residue chain is Protease HtpX homolog (299 aa).

2 helical membrane-spanning segments follow: residues 14-34 (WLLLLVFFLLLGLVGYGVGNL) and 39-59 (GFGGLILALVIGFIYVVTMIF). His-143 is a Zn(2+) binding site. Glu-144 is an active-site residue. His-147 contacts Zn(2+). A run of 2 helical transmembrane segments spans residues 153–173 (IRISTIAVALASAITMLAGMA) and 198–218 (IVFLILSLIAIILAPLAATLV). Zn(2+) is bound at residue Glu-227.

The protein belongs to the peptidase M48B family. The cofactor is Zn(2+).

Its subcellular location is the cell membrane. The polypeptide is Protease HtpX homolog (Streptococcus thermophilus (strain ATCC BAA-250 / LMG 18311)).